Consider the following 352-residue polypeptide: Photosystem II D2 protein (352 aa).

At Thr2 the chain carries N-acetylthreonine. At Thr2 the chain carries Phosphothreonine. The chain crosses the membrane as a helical span at residues 40-60; that stretch reads TAYLALGGWFTGTTFVTSWYT. Residue His117 coordinates chlorophyll a. The chain crosses the membrane as a helical span at residues 124–140; that stretch reads GFMLRQFEIARSVKIRP. Residues Gln129 and Asn142 each contribute to the pheophytin a site. The helical transmembrane segment at 152–165 threads the bilayer; sequence VFVSVFLIYPLGQS. Residue His197 coordinates chlorophyll a. The helical transmembrane segment at 207–227 threads the bilayer; that stretch reads AALLCAIHGATVENTLFEDGD. His214 and Phe261 together coordinate a plastoquinone. His214 contacts Fe cation. Residue His268 coordinates Fe cation. A helical transmembrane segment spans residues 278 to 294; it reads GLWMSAIGVVGLALNLR.

This sequence belongs to the reaction center PufL/M/PsbA/D family. PSII is composed of 1 copy each of membrane proteins PsbA, PsbB, PsbC, PsbD, PsbE, PsbF, PsbH, PsbI, PsbJ, PsbK, PsbL, PsbM, PsbT, PsbX, PsbY, PsbZ, Psb30/Ycf12, at least 3 peripheral proteins of the oxygen-evolving complex and a large number of cofactors. It forms dimeric complexes. The cofactor is The D1/D2 heterodimer binds P680, chlorophylls that are the primary electron donor of PSII, and subsequent electron acceptors. It shares a non-heme iron and each subunit binds pheophytin, quinone, additional chlorophylls, carotenoids and lipids. There is also a Cl(-1) ion associated with D1 and D2, which is required for oxygen evolution. The PSII complex binds additional chlorophylls, carotenoids and specific lipids..

The protein resides in the plastid. It localises to the chloroplast thylakoid membrane. It catalyses the reaction 2 a plastoquinone + 4 hnu + 2 H2O = 2 a plastoquinol + O2. In terms of biological role, photosystem II (PSII) is a light-driven water:plastoquinone oxidoreductase that uses light energy to abstract electrons from H(2)O, generating O(2) and a proton gradient subsequently used for ATP formation. It consists of a core antenna complex that captures photons, and an electron transfer chain that converts photonic excitation into a charge separation. The D1/D2 (PsbA/PsbD) reaction center heterodimer binds P680, the primary electron donor of PSII as well as several subsequent electron acceptors. D2 is needed for assembly of a stable PSII complex. This is Photosystem II D2 protein from Chlorella vulgaris (Green alga).